The primary structure comprises 128 residues: Phosphoribosyl-AMP cyclohydrolase (128 aa).

Asp-77 contributes to the Mg(2+) binding site. Cys-78 lines the Zn(2+) pocket. The Mg(2+) site is built by Asp-79 and Asp-81. The Zn(2+) site is built by Cys-94 and Cys-101.

This sequence belongs to the PRA-CH family. In terms of assembly, homodimer. Requires Mg(2+) as cofactor. It depends on Zn(2+) as a cofactor.

The protein localises to the cytoplasm. It catalyses the reaction 1-(5-phospho-beta-D-ribosyl)-5'-AMP + H2O = 1-(5-phospho-beta-D-ribosyl)-5-[(5-phospho-beta-D-ribosylamino)methylideneamino]imidazole-4-carboxamide. The protein operates within amino-acid biosynthesis; L-histidine biosynthesis; L-histidine from 5-phospho-alpha-D-ribose 1-diphosphate: step 3/9. In terms of biological role, catalyzes the hydrolysis of the adenine ring of phosphoribosyl-AMP. The polypeptide is Phosphoribosyl-AMP cyclohydrolase (Granulibacter bethesdensis (strain ATCC BAA-1260 / CGDNIH1)).